The chain runs to 114 residues: Putative small ubiquitin-related modifier 4 (114 aa).

Residues 1–20 form a disordered region; sequence MSTTSRVGSNEVKMEGQKRK. The 79-residue stretch at 26–104 folds into the Ubiquitin-like domain; sequence THVTLKVKGQ…IDAMLCQQSG (79 aa). G104 is covalently cross-linked (Glycyl lysine isopeptide (Gly-Lys) (interchain with K-? in acceptor proteins)).

It belongs to the ubiquitin family. SUMO subfamily. Interacts with SAE2, SCE1, SIZ1 and MMS21 Covalently attached to a number of proteins.

The protein resides in the nucleus. It localises to the cytoplasm. Its function is as follows. Ubiquitin-like protein which can be covalently attached to target lysines as a monomer. Does not seem to be involved in protein degradation and may function as an antagonist of ubiquitin in the degradation process. This is Putative small ubiquitin-related modifier 4 (SUMO4) from Arabidopsis thaliana (Mouse-ear cress).